The primary structure comprises 333 residues: Holliday junction branch migration complex subunit RuvB (333 aa).

The segment at 4–185 (IDRLVSTDVL…FGIVQRLEFY (182 aa)) is large ATPase domain (RuvB-L). Residues Ile-24, Arg-25, Gly-66, Lys-69, Thr-70, Thr-71, 132–134 (EDY), Arg-175, Tyr-185, and Arg-222 each bind ATP. Residue Thr-70 participates in Mg(2+) binding. The interval 186–256 (SVPDLEHIVS…IAIKALEMLN (71 aa)) is small ATPAse domain (RuvB-S). Residues 259 to 333 (KEGLDYMDSK…HAYQHFICGG (75 aa)) form a head domain (RuvB-H) region. Arg-295, Arg-314, and Arg-319 together coordinate DNA.

The protein belongs to the RuvB family. As to quaternary structure, homohexamer. Forms an RuvA(8)-RuvB(12)-Holliday junction (HJ) complex. HJ DNA is sandwiched between 2 RuvA tetramers; dsDNA enters through RuvA and exits via RuvB. An RuvB hexamer assembles on each DNA strand where it exits the tetramer. Each RuvB hexamer is contacted by two RuvA subunits (via domain III) on 2 adjacent RuvB subunits; this complex drives branch migration. In the full resolvosome a probable DNA-RuvA(4)-RuvB(12)-RuvC(2) complex forms which resolves the HJ.

The protein resides in the cytoplasm. The enzyme catalyses ATP + H2O = ADP + phosphate + H(+). Functionally, the RuvA-RuvB-RuvC complex processes Holliday junction (HJ) DNA during genetic recombination and DNA repair, while the RuvA-RuvB complex plays an important role in the rescue of blocked DNA replication forks via replication fork reversal (RFR). RuvA specifically binds to HJ cruciform DNA, conferring on it an open structure. The RuvB hexamer acts as an ATP-dependent pump, pulling dsDNA into and through the RuvAB complex. RuvB forms 2 homohexamers on either side of HJ DNA bound by 1 or 2 RuvA tetramers; 4 subunits per hexamer contact DNA at a time. Coordinated motions by a converter formed by DNA-disengaged RuvB subunits stimulates ATP hydrolysis and nucleotide exchange. Immobilization of the converter enables RuvB to convert the ATP-contained energy into a lever motion, pulling 2 nucleotides of DNA out of the RuvA tetramer per ATP hydrolyzed, thus driving DNA branch migration. The RuvB motors rotate together with the DNA substrate, which together with the progressing nucleotide cycle form the mechanistic basis for DNA recombination by continuous HJ branch migration. Branch migration allows RuvC to scan DNA until it finds its consensus sequence, where it cleaves and resolves cruciform DNA. This chain is Holliday junction branch migration complex subunit RuvB, found in Hamiltonella defensa subsp. Acyrthosiphon pisum (strain 5AT).